Consider the following 131-residue polypeptide: Small ribosomal subunit protein uS8 (131 aa).

This sequence belongs to the universal ribosomal protein uS8 family. As to quaternary structure, part of the 30S ribosomal subunit. Contacts proteins S5 and S12.

Its function is as follows. One of the primary rRNA binding proteins, it binds directly to 16S rRNA central domain where it helps coordinate assembly of the platform of the 30S subunit. The chain is Small ribosomal subunit protein uS8 from Paracidovorax citrulli (strain AAC00-1) (Acidovorax citrulli).